We begin with the raw amino-acid sequence, 322 residues long: uncharacterized protein (322 aa).

Basic residues-rich tracts occupy residues 1–16 and 43–61; these read MPGNSRRRGAVRKSGT and LRPHHPAAKRARAQPRRPV. Residues 1-69 are disordered; sequence MPGNSRRRGA…PVKRADETET (69 aa). Residues glycine 261, isoleucine 281, and leucine 290 each coordinate S-adenosyl-L-methionine.

The protein belongs to the class IV-like SAM-binding methyltransferase superfamily. RNA methyltransferase TrmH family.

This is an uncharacterized protein from Mycobacterium bovis (strain ATCC BAA-935 / AF2122/97).